A 298-amino-acid chain; its full sequence is Protease HtpX homolog (298 aa).

A run of 2 helical transmembrane segments spans residues 15-35 and 39-59; these read LIMV…GYLF and PWMG…IMWQ. Zn(2+) is bound at residue histidine 143. Residue glutamate 144 is part of the active site. Residue histidine 147 participates in Zn(2+) binding. The next 2 helical transmembrane spans lie at 153-173 and 197-217; these read ILLS…SGMA and MIFK…SASL. Glutamate 227 serves as a coordination point for Zn(2+).

This sequence belongs to the peptidase M48B family. Requires Zn(2+) as cofactor.

It is found in the cell membrane. The chain is Protease HtpX homolog from Lactobacillus helveticus (strain DPC 4571).